The chain runs to 109 residues: Mitochondrial pyruvate carrier 1 (109 aa).

Alanine 2 carries the post-translational modification N-acetylalanine. The Mitochondrial matrix segment spans residues 2–20 (AGALVRKAADYVRSKDFRD). The helical transmembrane segment at 21-41 (YLMSTHFWGPVANWGLPIAAI) threads the bilayer. The Mother cell cytoplasmic portion of the chain corresponds to 42 to 52 (NDMKKSPEIIS). Residues 53 to 71 (GRMTFALCCYSLTFMRFAY) form a helical membrane-spanning segment. Lysine 72 is subject to N6-acetyllysine. The Mitochondrial matrix segment spans residues 72–109 (KVQPRNWLLFACHATNEVAQLIQGGRLIRHEMSKKASA).

Homodimer. Forms heterodimer with MPC2. The heterodimer is the more stable and dominant form.

It localises to the mitochondrion inner membrane. The enzyme catalyses pyruvate(out) + H(+)(out) = pyruvate(in) + H(+)(in). In terms of biological role, mediates the uptake of pyruvate into mitochondria. This Bos taurus (Bovine) protein is Mitochondrial pyruvate carrier 1 (MPC1).